We begin with the raw amino-acid sequence, 397 residues long: Ribosomal RNA large subunit methyltransferase I (397 aa).

The 80-residue stretch at 2-81 (STTVYLQKDR…EQIDTEFFVR (80 aa)) folds into the PUA domain.

Belongs to the methyltransferase superfamily. RlmI family.

It localises to the cytoplasm. The enzyme catalyses cytidine(1962) in 23S rRNA + S-adenosyl-L-methionine = 5-methylcytidine(1962) in 23S rRNA + S-adenosyl-L-homocysteine + H(+). In terms of biological role, specifically methylates the cytosine at position 1962 (m5C1962) of 23S rRNA. This Tolumonas auensis (strain DSM 9187 / NBRC 110442 / TA 4) protein is Ribosomal RNA large subunit methyltransferase I.